We begin with the raw amino-acid sequence, 258 residues long: Aspartate/glutamate leucyltransferase (258 aa).

The protein belongs to the R-transferase family. Bpt subfamily.

Its subcellular location is the cytoplasm. The catalysed reaction is N-terminal L-glutamyl-[protein] + L-leucyl-tRNA(Leu) = N-terminal L-leucyl-L-glutamyl-[protein] + tRNA(Leu) + H(+). It catalyses the reaction N-terminal L-aspartyl-[protein] + L-leucyl-tRNA(Leu) = N-terminal L-leucyl-L-aspartyl-[protein] + tRNA(Leu) + H(+). In terms of biological role, functions in the N-end rule pathway of protein degradation where it conjugates Leu from its aminoacyl-tRNA to the N-termini of proteins containing an N-terminal aspartate or glutamate. The polypeptide is Aspartate/glutamate leucyltransferase (Rhizobium johnstonii (strain DSM 114642 / LMG 32736 / 3841) (Rhizobium leguminosarum bv. viciae)).